A 316-amino-acid polypeptide reads, in one-letter code: MLPSSIQISGEPLSGAEVRDICRGLRDNAVRLLSLRGCRLCDRDFGRICRALAGATSLAQLNLNLGVVSSPSRIKQLAEALRTNRSIQSLFLHGSPLTDAGLALLNPALALHPALVALDLGDCMLGDEAINLICGLLPPDGAKSGLKELTLSANPGITPKGWSRLAIAVAHSSQVRVLNLDYNPLGDHVAGMLAVAVASSRTLEVLDLEGTGLTNQSAQTLLDMVENYPTALRSLVLAENSISPELQQQICDLLSEGEEEEEVAGGAGDTQEWERGREPAAHQRGSSSWMCPSDPSSQMVLMTSGLGDSLLAETEM.

LRR repeat units follow at residues Ser-57–Ala-78, Ser-86–Asn-106, Ala-114–Leu-137, Gly-145–Ala-166, Gln-174–Asp-187, Thr-202–Asp-223, and Ala-231–Ile-250. The interval Gly-257–Ser-296 is disordered. Residues Glu-272–Ala-281 show a composition bias toward basic and acidic residues. Residues Ser-286 to Ser-296 are compositionally biased toward low complexity.

The polypeptide is Leucine-rich repeat-containing protein 73 (LRRC73) (Homo sapiens (Human)).